The following is a 267-amino-acid chain: Glutamate racemase (267 aa).

Residues 9–10 (DS) and 41–42 (YS) each bind substrate. C73 serves as the catalytic Proton donor/acceptor. 74 to 75 (NT) lines the substrate pocket. C184 functions as the Proton donor/acceptor in the catalytic mechanism. 185-186 (TH) contacts substrate.

It belongs to the aspartate/glutamate racemases family.

The catalysed reaction is L-glutamate = D-glutamate. It functions in the pathway cell wall biogenesis; peptidoglycan biosynthesis. Functionally, provides the (R)-glutamate required for cell wall biosynthesis. The chain is Glutamate racemase from Glaesserella parasuis serovar 5 (strain SH0165) (Haemophilus parasuis).